We begin with the raw amino-acid sequence, 433 residues long: Serine hydroxymethyltransferase (433 aa).

Alanine 122–valine 124 contacts (6S)-5,6,7,8-tetrahydrofolate. Lysine 228 carries the post-translational modification N6-(pyridoxal phosphate)lysine.

The protein belongs to the SHMT family. As to quaternary structure, homodimer. Pyridoxal 5'-phosphate serves as cofactor.

The protein localises to the cytoplasm. The protein operates within amino-acid biosynthesis; glycine biosynthesis; glycine from L-serine: step 1/1. In terms of biological role, catalyzes the reversible interconversion of serine and glycine with a modified folate serving as the one-carbon carrier. Also exhibits a pteridine-independent aldolase activity toward beta-hydroxyamino acids, producing glycine and aldehydes, via a retro-aldol mechanism. This is Serine hydroxymethyltransferase from Sulfolobus acidocaldarius (strain ATCC 33909 / DSM 639 / JCM 8929 / NBRC 15157 / NCIMB 11770).